An 82-amino-acid polypeptide reads, in one-letter code: Capsid protein G8P (82 aa).

Residues 1-28 (MKAMKQRIAKFSPVASFRNLCIAGSVTA) form the signal peptide. At 29-57 (ATSLPAFAGVIDTSAVESAITDGQGDMKA) the chain is on the periplasmic side. Residues 58–78 (IGGYIVGALVILAVAGLIYSM) traverse the membrane as a helical segment. The Cytoplasmic portion of the chain corresponds to 79-82 (LRKA).

The protein belongs to the inovirus capsid protein family. Homomultimerizes. There are several thousands of this protein in the phage capsid.

Its subcellular location is the virion. The protein localises to the host membrane. Self assembles to form a helical capsid wrapping up the viral genomic DNA. The capsid displays a filamentous structure with a length of 760-1950 nm and a width of 6-8 nm. The virion assembly and budding take place at the host inner membrane. The polypeptide is Capsid protein G8P (VIII) (Pseudomonas phage Pf1 (Bacteriophage Pf1)).